The sequence spans 88 residues: Putative septation protein SpoVG (88 aa).

It belongs to the SpoVG family.

Its function is as follows. Could be involved in septation. This chain is Putative septation protein SpoVG, found in Caldicellulosiruptor saccharolyticus (strain ATCC 43494 / DSM 8903 / Tp8T 6331).